The primary structure comprises 346 residues: Phosphoribosylformylglycinamidine cyclo-ligase (346 aa).

The protein belongs to the AIR synthase family.

It is found in the cytoplasm. The enzyme catalyses 2-formamido-N(1)-(5-O-phospho-beta-D-ribosyl)acetamidine + ATP = 5-amino-1-(5-phospho-beta-D-ribosyl)imidazole + ADP + phosphate + H(+). Its pathway is purine metabolism; IMP biosynthesis via de novo pathway; 5-amino-1-(5-phospho-D-ribosyl)imidazole from N(2)-formyl-N(1)-(5-phospho-D-ribosyl)glycinamide: step 2/2. This chain is Phosphoribosylformylglycinamidine cyclo-ligase, found in Bacillus cereus (strain ATCC 10987 / NRS 248).